Here is a 44-residue protein sequence, read N- to C-terminus: Thymosin beta-10 (44 aa).

Belongs to the thymosin beta family.

Its subcellular location is the cytoplasm. It is found in the cytoskeleton. Plays an important role in the organization of the cytoskeleton. Binds to and sequesters actin monomers (G actin) and therefore inhibits actin polymerization. The polypeptide is Thymosin beta-10 (Torpedo marmorata (Marbled electric ray)).